The primary structure comprises 292 residues: MPTLKDIRIRLKGIKSTQQVTKAMKMVAAAKLRRAQDRAIQARPYAGKLKEMLASLSTKVDTSLNPLLSPREEVNKVLVVLVTSDRGLCGGFNANIMKLAQRVIHEDYAAQHAKGAVTMICAGTKGSDFFRKRGYNVTKAYPGVFQNLDFSSAKEIAELASQMYLKGEADKVILVYNEFKSVLAPNLRTEQLLPIAPEEGTEEAAGSEYLYEPSPEAIIDELVPKHLNTQVWRVMLESNAAEQAARMAAMDSATENAKELIRVLNISYNRARQAAITKELSEIVAGADALKQ.

It belongs to the ATPase gamma chain family. In terms of assembly, F-type ATPases have 2 components, CF(1) - the catalytic core - and CF(0) - the membrane proton channel. CF(1) has five subunits: alpha(3), beta(3), gamma(1), delta(1), epsilon(1). CF(0) has three main subunits: a, b and c.

The protein resides in the cell inner membrane. Functionally, produces ATP from ADP in the presence of a proton gradient across the membrane. The gamma chain is believed to be important in regulating ATPase activity and the flow of protons through the CF(0) complex. This chain is ATP synthase gamma chain, found in Chlorobaculum parvum (strain DSM 263 / NCIMB 8327) (Chlorobium vibrioforme subsp. thiosulfatophilum).